The sequence spans 154 residues: Myoglobin (154 aa).

One can recognise a Globin domain in the interval 2–148 (GLSDGEWQLV…FRNDIAAKYK (147 aa)). Phosphoserine is present on Ser-4. His-65 lines the nitrite pocket. His-65 contributes to the O2 binding site. Thr-68 is subject to Phosphothreonine. Residue His-94 participates in heme b binding.

Belongs to the globin family. Monomeric.

It localises to the cytoplasm. It is found in the sarcoplasm. It carries out the reaction Fe(III)-heme b-[protein] + nitric oxide + H2O = Fe(II)-heme b-[protein] + nitrite + 2 H(+). It catalyses the reaction H2O2 + AH2 = A + 2 H2O. In terms of biological role, monomeric heme protein which primary function is to store oxygen and facilitate its diffusion within muscle tissues. Reversibly binds oxygen through a pentacoordinated heme iron and enables its timely and efficient release as needed during periods of heightened demand. Depending on the oxidative conditions of tissues and cells, and in addition to its ability to bind oxygen, it also has a nitrite reductase activity whereby it regulates the production of bioactive nitric oxide. Under stress conditions, like hypoxia and anoxia, it also protects cells against reactive oxygen species thanks to its pseudoperoxidase activity. This chain is Myoglobin (MB), found in Spalax ehrenbergi (Middle East blind mole rat).